A 419-amino-acid polypeptide reads, in one-letter code: eIF5-mimic protein 1 (419 aa).

The segment at 1 to 22 (MNKHQKPVLTGQRFKTRKRDEK) is disordered. Position 117 is an N6-acetyllysine (K117). The region spanning 248 to 415 (VQQSLGTRKE…QNAEEESESE (168 aa)) is the W2 domain. Phosphoserine is present on residues S412 and S414.

The protein belongs to the BZW family. In terms of assembly, interacts with EIF3E. Interacts with EIF2S2. Interacts with EIF3C.

It localises to the cytoplasm. Functionally, translation initiation regulator which represses non-AUG initiated translation and repeat-associated non-AUG (RAN) initiated translation by acting as a competitive inhibitor of eukaryotic translation initiation factor 5 (EIF5) function. Increases the accuracy of translation initiation by impeding EIF5-dependent translation from non-AUG codons by competing with it for interaction with EIF2S2 within the 43S pre-initiation complex (PIC) in an EIF3C-binding dependent manner. The protein is eIF5-mimic protein 1 (BZW2) of Homo sapiens (Human).